The primary structure comprises 433 residues: 3-phosphoshikimate 1-carboxyvinyltransferase (433 aa).

3 residues coordinate 3-phosphoshikimate: Lys23, Ser24, and Arg28. Position 23 (Lys23) interacts with phosphoenolpyruvate. Phosphoenolpyruvate contacts are provided by Gly95 and Arg123. 3-phosphoshikimate contacts are provided by Ser170, Ser171, Gln172, Ser198, Asp317, and Lys344. Gln172 contributes to the phosphoenolpyruvate binding site. The active-site Proton acceptor is the Asp317. 3 residues coordinate phosphoenolpyruvate: Arg348, Arg391, and Lys416.

It belongs to the EPSP synthase family. Monomer.

It is found in the cytoplasm. The enzyme catalyses 3-phosphoshikimate + phosphoenolpyruvate = 5-O-(1-carboxyvinyl)-3-phosphoshikimate + phosphate. It functions in the pathway metabolic intermediate biosynthesis; chorismate biosynthesis; chorismate from D-erythrose 4-phosphate and phosphoenolpyruvate: step 6/7. In terms of biological role, catalyzes the transfer of the enolpyruvyl moiety of phosphoenolpyruvate (PEP) to the 5-hydroxyl of shikimate-3-phosphate (S3P) to produce enolpyruvyl shikimate-3-phosphate and inorganic phosphate. The chain is 3-phosphoshikimate 1-carboxyvinyltransferase from Neisseria meningitidis serogroup B (strain ATCC BAA-335 / MC58).